A 199-amino-acid chain; its full sequence is GTP cyclohydrolase-2 (199 aa).

52–56 (RMHSE) serves as a coordination point for GTP. Cysteine 57, cysteine 68, and cysteine 70 together coordinate Zn(2+). Residues glutamine 73, 94 to 96 (EGR), and threonine 116 contribute to the GTP site. Residue aspartate 128 is the Proton acceptor of the active site. Arginine 130 functions as the Nucleophile in the catalytic mechanism. The GTP site is built by threonine 151 and lysine 156.

This sequence belongs to the GTP cyclohydrolase II family. The cofactor is Zn(2+).

The catalysed reaction is GTP + 4 H2O = 2,5-diamino-6-hydroxy-4-(5-phosphoribosylamino)-pyrimidine + formate + 2 phosphate + 3 H(+). It participates in cofactor biosynthesis; riboflavin biosynthesis; 5-amino-6-(D-ribitylamino)uracil from GTP: step 1/4. Its function is as follows. Catalyzes the conversion of GTP to 2,5-diamino-6-ribosylamino-4(3H)-pyrimidinone 5'-phosphate (DARP), formate and pyrophosphate. The chain is GTP cyclohydrolase-2 from Aliivibrio salmonicida (strain LFI1238) (Vibrio salmonicida (strain LFI1238)).